We begin with the raw amino-acid sequence, 740 residues long: 1,4-alpha-glucan branching enzyme GlgB (740 aa).

The Nucleophile role is filled by Asp-409. Residue Glu-462 is the Proton donor of the active site.

It belongs to the glycosyl hydrolase 13 family. GlgB subfamily. Monomer.

It carries out the reaction Transfers a segment of a (1-&gt;4)-alpha-D-glucan chain to a primary hydroxy group in a similar glucan chain.. It functions in the pathway glycan biosynthesis; glycogen biosynthesis. Catalyzes the formation of the alpha-1,6-glucosidic linkages in glycogen by scission of a 1,4-alpha-linked oligosaccharide from growing alpha-1,4-glucan chains and the subsequent attachment of the oligosaccharide to the alpha-1,6 position. In Methylococcus capsulatus (strain ATCC 33009 / NCIMB 11132 / Bath), this protein is 1,4-alpha-glucan branching enzyme GlgB.